The chain runs to 228 residues: Fluoride-specific ion channel FluC (228 aa).

Transmembrane regions (helical) follow at residues 3-23 (LSLF…FWVS), 37-57 (GTLF…VMMI), 72-92 (VGFL…LALF), 101-121 (ALNV…GAVL), 141-161 (IFGA…LAFA), 172-192 (LVLV…LVVT), and 202-222 (LWGA…LGLV). Na(+) is bound by residues Gly-76 and Thr-79.

Belongs to the fluoride channel Fluc/FEX (TC 1.A.43) family.

It is found in the cell inner membrane. The enzyme catalyses fluoride(in) = fluoride(out). Its activity is regulated as follows. Na(+) is not transported, but it plays an essential structural role and its presence is essential for fluoride channel function. In terms of biological role, fluoride-specific ion channel. Important for reducing fluoride concentration in the cell, thus reducing its toxicity. This is Fluoride-specific ion channel FluC from Methylococcus capsulatus (strain ATCC 33009 / NCIMB 11132 / Bath).